An 82-amino-acid polypeptide reads, in one-letter code: UPF0180 protein BC_1394 (82 aa).

It belongs to the UPF0180 family.

This is UPF0180 protein BC_1394 from Bacillus cereus (strain ATCC 14579 / DSM 31 / CCUG 7414 / JCM 2152 / NBRC 15305 / NCIMB 9373 / NCTC 2599 / NRRL B-3711).